The following is a 540-amino-acid chain: Testis-specific chromodomain protein Y 1 (540 aa).

Positions 6-66 (FEVEAIVDKR…RQTEKQKKLT (61 aa)) constitute a Chromo domain. Positions 76 to 106 (NNARRRTSRSTKANYSKNSPKTPVTDKHHRS) are disordered. Over residues 87-97 (KANYSKNSPKT) the composition is skewed to polar residues.

As to quaternary structure, interacts (via chromo domain) with histone H3K9me3. In terms of tissue distribution, testis-specific. Detected in spermatids (at protein level).

The protein localises to the nucleus. The enzyme catalyses L-lysyl-[protein] + acetyl-CoA = N(6)-acetyl-L-lysyl-[protein] + CoA + H(+). Its function is as follows. Has histone acetyltransferase activity, with a preference for histone H4. The polypeptide is Testis-specific chromodomain protein Y 1 (CDY1) (Homo sapiens (Human)).